The chain runs to 622 residues: Cytochrome c oxidase subunit 1 (622 aa).

Residues 1–27 (MLNALTEKRTRGSMLWDYLTTVDHKKI) lie on the Extracellular side of the membrane. The helical transmembrane segment at 28–46 (AILYLVAGGFFFLVGGIEA) threads the bilayer. Residues 47–68 (MFIRIQLAKPENAFLSAQAYNE) lie on the Cytoplasmic side of the membrane. A helical membrane pass occupies residues 69 to 88 (VMTMHGTTMIFLAAMPLLFA). Residue H73 participates in Fe(II)-heme a binding. Residues 89–110 (LMNAVVPLQIGARDVSFPFLNA) are Extracellular-facing. A helical membrane pass occupies residues 111 to 128 (LGFWLFFFGGIFLNLSWF). Over 129 to 159 (LGGAPDAGWTSYASLSLHSKGHGIDFFVLGL) the chain is Cytoplasmic. A helical transmembrane segment spans residues 160–178 (QISGLGTLIAGINFLATII). Over 179–196 (NMRAPGMTYMRLPLFTWT) the chain is Extracellular. Residues 197–215 (TFVASALILFAFPPLTVGL) form a helical membrane-spanning segment. Residues 216 to 241 (ALMMLDRLFGTNFFNPELGGNTVIWE) are Cytoplasmic-facing. Residues 242 to 261 (HLFWIFGHPEVYILILPAFG) form a helical membrane-spanning segment. Cu cation contacts are provided by H249 and Y253. A cross-link (1'-histidyl-3'-tyrosine (His-Tyr)) is located at residues 249-253 (HPEVY). Over 262-284 (IFSEVIPVFARKRLFGYSSMVFA) the chain is Extracellular. A helical membrane pass occupies residues 285–304 (IVLIGFLGFMVWVHHMFTTG). The Cu cation site is built by H298 and H299. At 305–312 (LGPIANAI) the chain is on the cytoplasmic side. A helical membrane pass occupies residues 313 to 331 (FAVATMAIAIPTGIKIFNW). The Extracellular segment spans residues 332 to 346 (LLTIWGGNVKYTTAM). A helical membrane pass occupies residues 347–366 (LYAVSFIPSFVLGGVTGVML). The Cytoplasmic portion of the chain corresponds to 367–374 (AAAAADYQ). A helical membrane pass occupies residues 375–394 (FHDTYFVVAHFHYVIIGGVV). H384 lines the heme a3 pocket. A Fe(II)-heme a-binding site is contributed by H386. Residues 395–421 (FGLLAGVHFWWPKMFGKILHETMGKIS) lie on the Extracellular side of the membrane. The chain crosses the membrane as a helical span at residues 422-441 (FVLFFIGFHLTFFIQHFVGL). At 442 to 459 (MGMPRRVYTFLPGQGLET) the chain is on the cytoplasmic side. Residues 460 to 479 (GNLISTIGAFFMAAAVILLL) traverse the membrane as a helical segment. Over 480-552 (VNVIWTSVKG…EPVDDIHMPN (73 aa)) the chain is Extracellular. The helical transmembrane segment at 553–572 (GSILPLIISFGLFVAAFGLL) threads the bilayer. The Cytoplasmic portion of the chain corresponds to 573–580 (YRSDYAWG). The chain crosses the membrane as a helical span at residues 581–604 (LPVIFIGLGITFITMLLRSVIDDH). The Cytoplasmic portion of the chain corresponds to 605 to 622 (GYHIHKEELPNDDKGVKA).

This sequence belongs to the heme-copper respiratory oxidase family. The cofactor is Cu(2+). It depends on heme as a cofactor.

It is found in the cell membrane. The enzyme catalyses 4 Fe(II)-[cytochrome c] + O2 + 8 H(+)(in) = 4 Fe(III)-[cytochrome c] + 2 H2O + 4 H(+)(out). It participates in energy metabolism; oxidative phosphorylation. Its function is as follows. Cytochrome c oxidase is the component of the respiratory chain that catalyzes the reduction of oxygen to water. Subunits 1-3 form the functional core of the enzyme complex. Co I is the catalytic subunit of the enzyme. Electrons originating in cytochrome c are transferred via the copper A center of subunit 2 and heme a of subunit 1 to the bimetallic center formed by heme a3 and copper B. This cytochrome c oxidase shows proton pump activity across the membrane in addition to the electron transfer. This Bacillus subtilis (strain 168) protein is Cytochrome c oxidase subunit 1 (ctaD).